Consider the following 175-residue polypeptide: uncharacterized protein (175 aa).

To yeast YER187w.

This is an uncharacterized protein from Saccharomyces cerevisiae (strain ATCC 204508 / S288c) (Baker's yeast).